Consider the following 204-residue polypeptide: Rho GDP-dissociation inhibitor 1 (204 aa).

Residues 1–36 (MAEQEPTAEQLAQIAAENEEDEHSVNYKPPAQKSIQ) form a disordered region. Ala-2 carries the N-acetylalanine modification. Phosphoserine is present on Ser-34. Lys-43 carries the post-translational modification N6-acetyllysine. The residue at position 47 (Ser-47) is a Phosphoserine. Residues 66 to 83 (NVPNVVVTRLTLVCSTAP) are hydrophobic. Ser-101 is subject to Phosphoserine; by PKA. An N6-acetyllysine modification is found at Lys-105. Position 115 is a phosphoserine; by PKC (Ser-115). Lys-127 is subject to N6-acetyllysine. Residues Lys-138 and Lys-141 each participate in a glycyl lysine isopeptide (Lys-Gly) (interchain with G-Cter in SUMO1); alternate cross-link. Glycyl lysine isopeptide (Lys-Gly) (interchain with G-Cter in SUMO2); alternate cross-links involve residues Lys-138 and Lys-141. Lys-141 carries the post-translational modification N6-acetyllysine; alternate. Lys-141 carries the N6-succinyllysine; alternate modification. Lys-178 is subject to N6-acetyllysine.

The protein belongs to the Rho GDI family. Monomer. Interacts with FER. Interacts with PLXNB3. Forms a heterodimer with RAC1. Interacts with RHOA, the affinity is increased by three orders of magnitude when RHOA is prenylated. Interacts with PSMD10; the interaction increases ARHGDIA association with RHOA, leading to ARHGDIA-mediated inactivation of RHOA and ROCK and prolonged AKT activation. Interacts with KANK2; the interaction is direct and may regulate the interaction of ARHGDIA with RHOA, RAC1 and CDC42. Interacts with RHOC. Interacts with CDC42. Interacts with NGFR (via death domain); NGFR binding decreases the affinity for RHOA. As to expression, brain, lung, thymus, spleen, small intestine, and kidney, and weakly in heart and liver.

It is found in the cytoplasm. Controls Rho proteins homeostasis. Regulates the GDP/GTP exchange reaction of the Rho proteins by inhibiting the dissociation of GDP from them, and the subsequent binding of GTP to them. Retains Rho proteins such as CDC42, RAC1 and RHOA in an inactive cytosolic pool, regulating their stability and protecting them from degradation. Actively involved in the recycling and distribution of activated Rho GTPases in the cell, mediates extraction from membranes of both inactive and activated molecules due its exceptionally high affinity for prenylated forms. Through the modulation of Rho proteins, may play a role in cell motility regulation. In glioma cells, inhibits cell migration and invasion by mediating the signals of SEMA5A and PLXNB3 that lead to inactivation of RAC1. This Bos taurus (Bovine) protein is Rho GDP-dissociation inhibitor 1 (ARHGDIA).